The chain runs to 366 residues: MNKIALYCRPGFEKECAAEITDKAGQKEIYGFARVKDNSGYVLFECYQHEDADRLIREIPFRELIFARQMLVVGELLRDLSPEDRISPIIGMLQGVMERAGELRVEVPDTNESKELLKFCRKFTVPLRNAMRQEKILLIRENANRPVIHVFFIAPGCCYVGYSYSNNNSPFYMGIPRLKFPSDAPSRSTLKLEEAFHVFIPYDEWEERLASGLYAVDLGACPGGWTYQLVKRSMMVHAVDNGPMSESLMDTGQVKHHKVDGFKFVPSTKNIYWLVCDMVEKPAKVTQLMADWLVNGWCREAIFNLKLPMKKRYEEVAHNLQKMHLQLKENGINAQIQAKHLYHDREEITVHVRRIWSAYAANRDDY.

S-adenosyl-L-methionine contacts are provided by residues Ser-188, 221-224 (CPGG), Asp-240, Asp-260, and Asp-277. Lys-306 functions as the Proton acceptor in the catalytic mechanism.

Belongs to the class I-like SAM-binding methyltransferase superfamily. RNA methyltransferase RlmE family. RlmM subfamily. Monomer.

The protein resides in the cytoplasm. It catalyses the reaction cytidine(2498) in 23S rRNA + S-adenosyl-L-methionine = 2'-O-methylcytidine(2498) in 23S rRNA + S-adenosyl-L-homocysteine + H(+). Its function is as follows. Catalyzes the 2'-O-methylation at nucleotide C2498 in 23S rRNA. This is Ribosomal RNA large subunit methyltransferase M from Photorhabdus sp. (strain Az29).